The primary structure comprises 232 residues: MIVAANLKCNHTRASFLNFTKKLDNFLSGEASNFKKNEILIFPPNTAFCDQISNFTQGAQNFFPCENGSFTGEIGADMLNEFGIKSVLIGHSERRVIFSESDRMVLEKFKFAKKRGWRIIFCVGESDIVRMNGNYREVLSDQLSEIDLDYENLIIAYEPIWAIGTGKSAKNEQIEEVLEFLAEKTEAPLLYGGSVNLKNISQISKLPHCSGVLIGSASWEAENFINLLKELQ.

A substrate-binding site is contributed by 6-8 (NLK). The active-site Electrophile is histidine 91. Glutamate 158 functions as the Proton acceptor in the catalytic mechanism. Substrate is bound by residues glycine 164 and serine 194.

The protein belongs to the triosephosphate isomerase family. Homodimer.

The protein resides in the cytoplasm. It catalyses the reaction D-glyceraldehyde 3-phosphate = dihydroxyacetone phosphate. It functions in the pathway carbohydrate biosynthesis; gluconeogenesis. It participates in carbohydrate degradation; glycolysis; D-glyceraldehyde 3-phosphate from glycerone phosphate: step 1/1. Functionally, involved in the gluconeogenesis. Catalyzes stereospecifically the conversion of dihydroxyacetone phosphate (DHAP) to D-glyceraldehyde-3-phosphate (G3P). This chain is Triosephosphate isomerase, found in Campylobacter hominis (strain ATCC BAA-381 / DSM 21671 / CCUG 45161 / LMG 19568 / NCTC 13146 / CH001A).